Consider the following 252-residue polypeptide: RNA-binding protein 2 (252 aa).

Disordered stretches follow at residues 1–34 and 232–252; these read MADG…PSGV and RLQF…RGKR. The RRM domain occupies 152–238; it reads STLYVEGLPS…SYLRLQFSRS (87 aa). Over residues 242-252 the composition is skewed to gly residues; that stretch reads RSGGPGPRGKR.

Probable RNA-binding protein. In Medicago truncatula (Barrel medic), this protein is RNA-binding protein 2.